A 396-amino-acid polypeptide reads, in one-letter code: Alanine racemase (396 aa).

Lys46 acts as the Proton acceptor; specific for D-alanine in catalysis. Lys46 is modified (N6-(pyridoxal phosphate)lysine). Substrate is bound at residue Arg145. The active-site Proton acceptor; specific for L-alanine is Tyr280. A substrate-binding site is contributed by Met328.

The protein belongs to the alanine racemase family. Pyridoxal 5'-phosphate serves as cofactor.

It carries out the reaction L-alanine = D-alanine. The protein operates within amino-acid biosynthesis; D-alanine biosynthesis; D-alanine from L-alanine: step 1/1. In terms of biological role, catalyzes the interconversion of L-alanine and D-alanine. May also act on other amino acids. The sequence is that of Alanine racemase (alr) from Brucella ovis (strain ATCC 25840 / 63/290 / NCTC 10512).